The following is a 340-amino-acid chain: 4-hydroxy-2-oxovalerate aldolase (340 aa).

A Pyruvate carboxyltransferase domain is found at 4–255 (VVIHDPTLRD…ATGIDLYALL (252 aa)). Position 12–13 (12–13 (RD)) interacts with substrate. Asp13 contacts Mn(2+). His16 acts as the Proton acceptor in catalysis. Substrate contacts are provided by Ser166 and His194. Mn(2+)-binding residues include His194 and His196.

It belongs to the 4-hydroxy-2-oxovalerate aldolase family.

It catalyses the reaction (S)-4-hydroxy-2-oxopentanoate = acetaldehyde + pyruvate. The polypeptide is 4-hydroxy-2-oxovalerate aldolase (Streptomyces griseus subsp. griseus (strain JCM 4626 / CBS 651.72 / NBRC 13350 / KCC S-0626 / ISP 5235)).